A 218-amino-acid chain; its full sequence is Ribose-5-phosphate isomerase A (218 aa).

Residues 27–30, 80–83, and 93–96 each bind substrate; these read TGST, DGAD, and KGGG. Residue glutamate 102 is the Proton acceptor of the active site. A substrate-binding site is contributed by lysine 120.

The protein belongs to the ribose 5-phosphate isomerase family. In terms of assembly, homodimer.

The catalysed reaction is aldehydo-D-ribose 5-phosphate = D-ribulose 5-phosphate. It participates in carbohydrate degradation; pentose phosphate pathway; D-ribose 5-phosphate from D-ribulose 5-phosphate (non-oxidative stage): step 1/1. Its function is as follows. Catalyzes the reversible conversion of ribose-5-phosphate to ribulose 5-phosphate. In Thiobacillus denitrificans (strain ATCC 25259 / T1), this protein is Ribose-5-phosphate isomerase A.